Reading from the N-terminus, the 885-residue chain is Translation initiation factor IF-2 (885 aa).

The disordered stretch occupies residues 1-295; the sequence is MTDNKDDKTI…EKFKRSQMQE (295 aa). Residues 63–77 show a composition bias toward low complexity; the sequence is PVAAAPAAARPAEQR. Positions 78-94 are enriched in pro residues; sequence PMPPQPSGRPAPQPQPH. Positions 130 to 183 are enriched in basic and acidic residues; it reads RDAEEAKRRAEEEVRRRREEEERIAREKEEAARRAAEEAARPAVEAEKVEEKVE. The segment covering 184-201 has biased composition (low complexity); the sequence is AATPAVAETRPLSERPAP. Positions 383–550 constitute a tr-type G domain; it reads ARPPIVTIMG…AILLQSEILD (168 aa). Residues 392–399 are G1; that stretch reads GHVDHGKT. Residue 392-399 participates in GTP binding; sequence GHVDHGKT. The interval 417–421 is G2; the sequence is GITQH. The G3 stretch occupies residues 438–441; that stretch reads DTPG. GTP contacts are provided by residues 438–442 and 492–495; these read DTPGH and NKID. Residues 492 to 495 are G4; it reads NKID. Positions 528–530 are G5; it reads SAK.

Belongs to the TRAFAC class translation factor GTPase superfamily. Classic translation factor GTPase family. IF-2 subfamily.

It is found in the cytoplasm. Functionally, one of the essential components for the initiation of protein synthesis. Protects formylmethionyl-tRNA from spontaneous hydrolysis and promotes its binding to the 30S ribosomal subunits. Also involved in the hydrolysis of GTP during the formation of the 70S ribosomal complex. The sequence is that of Translation initiation factor IF-2 from Sinorhizobium medicae (strain WSM419) (Ensifer medicae).